A 436-amino-acid chain; its full sequence is Xylose isomerase (436 aa).

Residues histidine 100 and aspartate 103 contribute to the active site. Mg(2+)-binding residues include glutamate 231, glutamate 267, histidine 270, aspartate 295, aspartate 306, aspartate 308, and aspartate 338.

The protein belongs to the xylose isomerase family. Homotetramer. The cofactor is Mg(2+).

The protein localises to the cytoplasm. The enzyme catalyses alpha-D-xylose = alpha-D-xylulofuranose. The sequence is that of Xylose isomerase from Rhizobium johnstonii (strain DSM 114642 / LMG 32736 / 3841) (Rhizobium leguminosarum bv. viciae).